The chain runs to 137 residues: Nucleoside diphosphate kinase (137 aa).

Residues K9, F57, R85, T91, R102, and N112 each coordinate ATP. The active-site Pros-phosphohistidine intermediate is the H115.

Belongs to the NDK family. Homotetramer. Mg(2+) serves as cofactor.

It localises to the cytoplasm. It catalyses the reaction a 2'-deoxyribonucleoside 5'-diphosphate + ATP = a 2'-deoxyribonucleoside 5'-triphosphate + ADP. It carries out the reaction a ribonucleoside 5'-diphosphate + ATP = a ribonucleoside 5'-triphosphate + ADP. Major role in the synthesis of nucleoside triphosphates other than ATP. The ATP gamma phosphate is transferred to the NDP beta phosphate via a ping-pong mechanism, using a phosphorylated active-site intermediate. In Campylobacter curvus (strain 525.92), this protein is Nucleoside diphosphate kinase.